The following is a 193-amino-acid chain: Peptidyl-tRNA hydrolase (193 aa).

Residue tyrosine 16 coordinates tRNA. The active-site Proton acceptor is histidine 21. 3 residues coordinate tRNA: phenylalanine 66, asparagine 68, and asparagine 114.

The protein belongs to the PTH family. In terms of assembly, monomer.

The protein localises to the cytoplasm. It carries out the reaction an N-acyl-L-alpha-aminoacyl-tRNA + H2O = an N-acyl-L-amino acid + a tRNA + H(+). In terms of biological role, hydrolyzes ribosome-free peptidyl-tRNAs (with 1 or more amino acids incorporated), which drop off the ribosome during protein synthesis, or as a result of ribosome stalling. Its function is as follows. Catalyzes the release of premature peptidyl moieties from peptidyl-tRNA molecules trapped in stalled 50S ribosomal subunits, and thus maintains levels of free tRNAs and 50S ribosomes. The protein is Peptidyl-tRNA hydrolase of Pelobacter propionicus (strain DSM 2379 / NBRC 103807 / OttBd1).